We begin with the raw amino-acid sequence, 369 residues long: MDSYEYTELLKKLNTKVQNISRVIKPQDIEIRLKEIEDIENRPEFWNDIKKASEIGKEKTKISNMLCKFKNVKSAISDAYELYELANAEDDEQTINSLFEDAQNLENKITNLEISMMLSGEDDSKNAIVSIHPGAGGTESNDWASMLYRMYLRFCEREGFKVETLDFQEGDEAGLKDVSFIVKGENAYGYLKAENGIHRLVRTSPFDSAGRRHTSFSSVMVSPEVDDDIAIEIEEKDLRLDYYRASGAGGQHVNKTESAVRITHIPTGIVVQCQNDRSQHKNKATAMKMLKSRLYEFELMKQQEANNAIEKSEIGWGHQIRSYVLFPYQQVKDTRSGEAYSQTDAILDGDIKKIIESVLISQKSSANKE.

The residue at position 251 (Q251) is an N5-methylglutamine.

Belongs to the prokaryotic/mitochondrial release factor family. Methylated by PrmC. Methylation increases the termination efficiency of RF2.

Its subcellular location is the cytoplasm. Its function is as follows. Peptide chain release factor 2 directs the termination of translation in response to the peptide chain termination codons UGA and UAA. In Campylobacter fetus subsp. fetus (strain 82-40), this protein is Peptide chain release factor 2.